The following is a 212-amino-acid chain: uncharacterized protein (212 aa).

In terms of domain architecture, NERD spans K29 to K146.

This is an uncharacterized protein from Bacillus anthracis.